The chain runs to 633 residues: MA3 DOMAIN-CONTAINING TRANSLATION REGULATORY FACTOR 4 (633 aa).

MI domains lie at 56 to 177 (DYKR…RAKK), 220 to 341 (ETKR…ERSD), 351 to 472 (RFKK…EISN), and 514 to 633 (DAKD…STDS). A Nuclear localization signal 1 motif is present at residues 94–101 (VKRLVSMA). Positions 389 to 396 (LKKLITLA) match the Nuclear localization signal 2 motif.

It belongs to the PDCD4 family. In terms of assembly, binds to EIF4A1. The association with ribosomes is modulated by cellular energy status and TOR activity. As to expression, mostly expressed, at low levels, in rosette leaves and flower buds, and, to a lower extent, in roots, stems, cauline leaves and flowers.

The protein localises to the nucleus. It localises to the cytoplasm. It is found in the cytosol. In terms of biological role, involved in target of rapamycin (TOR)-regulated translation control, especially under energy-deficient conditions. The chain is MA3 DOMAIN-CONTAINING TRANSLATION REGULATORY FACTOR 4 from Arabidopsis thaliana (Mouse-ear cress).